Here is a 201-residue protein sequence, read N- to C-terminus: FMN-dependent NADH:quinone oxidoreductase (201 aa).

FMN-binding positions include serine 10, serine 16–serine 18, methionine 95–phenylalanine 98, and threonine 139–glycine 142.

Belongs to the azoreductase type 1 family. As to quaternary structure, homodimer. Requires FMN as cofactor.

It catalyses the reaction 2 a quinone + NADH + H(+) = 2 a 1,4-benzosemiquinone + NAD(+). It carries out the reaction N,N-dimethyl-1,4-phenylenediamine + anthranilate + 2 NAD(+) = 2-(4-dimethylaminophenyl)diazenylbenzoate + 2 NADH + 2 H(+). In terms of biological role, quinone reductase that provides resistance to thiol-specific stress caused by electrophilic quinones. Also exhibits azoreductase activity. Catalyzes the reductive cleavage of the azo bond in aromatic azo compounds to the corresponding amines. This Tolumonas auensis (strain DSM 9187 / NBRC 110442 / TA 4) protein is FMN-dependent NADH:quinone oxidoreductase.